A 120-amino-acid polypeptide reads, in one-letter code: MDYEFLRDITGVVKVRMSMGHEVIGHWFNEEVKENLALLDEVEDAARTLKGSERSWQRAGHEYTLWMDGEEVMVRANQLEFAGDEMEEGMNYYDEESLSLCGVEDFLQVVAAYRNFVQQK.

The protein belongs to the UPF0231 family.

The sequence is that of UPF0231 protein YacL from Escherichia coli O6:K15:H31 (strain 536 / UPEC).